The chain runs to 266 residues: 3-methyl-2-oxobutanoate hydroxymethyltransferase (266 aa).

Mg(2+) contacts are provided by Asp-45 and Asp-84. 3-methyl-2-oxobutanoate contacts are provided by residues 45-46, Asp-84, and Lys-112; that span reads DS. Residue Glu-114 participates in Mg(2+) binding. The active-site Proton acceptor is the Glu-181.

It belongs to the PanB family. In terms of assembly, homodecamer; pentamer of dimers. Requires Mg(2+) as cofactor.

Its subcellular location is the cytoplasm. It carries out the reaction 3-methyl-2-oxobutanoate + (6R)-5,10-methylene-5,6,7,8-tetrahydrofolate + H2O = 2-dehydropantoate + (6S)-5,6,7,8-tetrahydrofolate. It functions in the pathway cofactor biosynthesis; (R)-pantothenate biosynthesis; (R)-pantoate from 3-methyl-2-oxobutanoate: step 1/2. Catalyzes the reversible reaction in which hydroxymethyl group from 5,10-methylenetetrahydrofolate is transferred onto alpha-ketoisovalerate to form ketopantoate. The chain is 3-methyl-2-oxobutanoate hydroxymethyltransferase from Pseudomonas syringae pv. syringae (strain B728a).